The primary structure comprises 146 residues: Large ribosomal subunit protein uL15 (146 aa).

Residues 1–54 (MKLHELKPAAGSKKAPKRIGRGTGSGLGRNAGKGEKGQNARSGGGVRPGFEGGQ) are disordered. Composition is skewed to gly residues over residues 21–31 (RGTGSGLGRNA) and 42–52 (SGGGVRPGFEG).

It belongs to the universal ribosomal protein uL15 family. As to quaternary structure, part of the 50S ribosomal subunit.

In terms of biological role, binds to the 23S rRNA. The sequence is that of Large ribosomal subunit protein uL15 from Clostridium beijerinckii (strain ATCC 51743 / NCIMB 8052) (Clostridium acetobutylicum).